A 3890-amino-acid polypeptide reads, in one-letter code: Extracellular matrix-binding protein EbhB (3890 aa).

The signal sequence occupies residues 1-39 (MNYRDKIQKFSIRKYTVGTFSTVIATLVFLGFNTSQAHA). The span at 41 to 59 (ETNQPASVVKQKQQSNNEQ) shows a compositional bias: polar residues. Disordered regions lie at residues 41 to 152 (ETNQ…GNDN), 249 to 277 (MPQRQQTSRRSNRIQTRSVESRAAEPRSV), 1347 to 1372 (NEKAQAEAGGRPNYRTTGYSQSNATT), and 2418 to 2438 (TITPKAGTGHSVSSNPSTLTA). Residues 65 to 78 (SQVQNSQNSQNSQS) are compositionally biased toward low complexity. A compositionally biased stretch (polar residues) spans 79-117 (LSATHENEQPNNSQANLVNQKVAQSSTTNDEQPASQNVN). Residues 130–140 (PDKEESKHKQN) are compositionally biased toward basic and acidic residues. 4 stretches are compositionally biased toward polar residues: residues 141–151 (ESQSANKNGND), 250–266 (PQRQQTSRRSNRIQTRS), 1360–1372 (YRTTGYSQSNATT), and 2427–2438 (HSVSSNPSTLTA). 13 FIVAR domains span residues 2524–2580 (AKNH…VSDA), 2610–2666 (SKNN…ISDE), 2687–2750 (DTHA…VQSA), 2780–2836 (AKTK…IAAE), 2864–2919 (AKTQ…IRQN), 2947–3002 (AKNQ…INTN), 3030–3085 (AKTQ…INDK), 3154–3212 (AMTK…VNQK), 3280–3339 (AMTG…VNNA), 3407–3465 (AMGN…VNRA), 3533–3591 (AMGN…VTEA), 3659–3717 (AMNT…ITQK), and 3785–3843 (AMAN…VEAA).

The polypeptide is Extracellular matrix-binding protein EbhB (ebhB) (Staphylococcus aureus (strain N315)).